Consider the following 530-residue polypeptide: Na(+)/H(+) antiporter NhaB (530 aa).

A run of 13 helical transmembrane segments spans residues 13–33, 34–54, 64–84, 90–110, 113–133, 136–156, 205–225, 234–254, 306–326, 351–371, 378–400, 450–470, and 481–501; these read FLGKAPDWYKITIISFLIINP, FVFFLVDPFVAGWLLVVEFIF, PLQPGGLLAIEAVAIGMTSPA, LVANIEVLLLLIFMVAGIYFM, LLLYIFTKILIGIRSKVLLSL, CLMAAFLSAFLDALTVIAVVI, LLMHAGIGTALGGVMTMVGEP, AGWLFGEFIIRMSPVTVPVFM, ALIAVWLIVGLAMHLAAVGLI, EEALPFTALLAVFFSIVAVII, PIISWVLTLNGNAQMTMFYIANG, ATPNGQAAFLFVLTSALAPLI, and ALPYTIVLALVGLAGIEFMLL.

The protein belongs to the NhaB Na(+)/H(+) (TC 2.A.34) antiporter family.

The protein resides in the cell inner membrane. The catalysed reaction is 2 Na(+)(in) + 3 H(+)(out) = 2 Na(+)(out) + 3 H(+)(in). Its function is as follows. Na(+)/H(+) antiporter that extrudes sodium in exchange for external protons. This is Na(+)/H(+) antiporter NhaB from Photobacterium profundum (strain SS9).